The chain runs to 164 residues: Cyclic pyranopterin monophosphate synthase (164 aa).

Substrate is bound by residues Leu-77–His-79 and Met-115–Glu-116. The active site involves Asp-130.

It belongs to the MoaC family. Homohexamer; trimer of dimers.

It catalyses the reaction (8S)-3',8-cyclo-7,8-dihydroguanosine 5'-triphosphate = cyclic pyranopterin phosphate + diphosphate. It functions in the pathway cofactor biosynthesis; molybdopterin biosynthesis. Functionally, catalyzes the conversion of (8S)-3',8-cyclo-7,8-dihydroguanosine 5'-triphosphate to cyclic pyranopterin monophosphate (cPMP). The protein is Cyclic pyranopterin monophosphate synthase of Rhizobium meliloti (strain 1021) (Ensifer meliloti).